The primary structure comprises 28 residues: Ranatuerin-2B (28 aa).

Residues C23 and C28 are joined by a disulfide bond.

As to expression, expressed by the skin glands.

It localises to the secreted. In terms of biological role, antibacterial activity against Gram-positive bacterium S.aureus and Gram-negative bacterium E.coli. Has activity against C.albicans. The chain is Ranatuerin-2B from Lithobates berlandieri (Rio Grande leopard frog).